The following is a 634-amino-acid chain: Chaperone protein HtpG (634 aa).

The segment at 1-339 (MAQETMSFQA…SADLPLNVSR (339 aa)) is a; substrate-binding. Residues 340–559 (EILQESRDVK…DGEMSGYLQR (220 aa)) form a b region. Residues 560-634 (MLKAAGQQAP…ALLLARANEA (75 aa)) form a c region.

This sequence belongs to the heat shock protein 90 family. As to quaternary structure, homodimer.

It localises to the cytoplasm. Molecular chaperone. Has ATPase activity. This is Chaperone protein HtpG from Paraburkholderia xenovorans (strain LB400).